The chain runs to 434 residues: Zinc carboxypeptidase (434 aa).

A signal peptide spans 1 to 33; the sequence is MSPKRRRLMAAALGACVALVLPLHAGSAQPSTA. A propeptide spans 34 to 114 (activation peptide); sequence KTPERTVFEV…DFTDPQVGTQ (81 aa). Residues 122-423 enclose the Peptidase M14 domain; that stretch reads GYHNFQETVT…SAVELFLSYS (302 aa). His183 and Glu186 together coordinate Zn(2+). The tract at residues 270–295 is disordered; that stretch reads GSSSSGSSETTAARRRSPPRRSPHPH. A compositionally biased stretch (basic residues) spans 282-293; the sequence is ARRRSPPRRSPH. His315 is a binding site for Zn(2+). Glu388 (proton donor/acceptor) is an active-site residue.

The protein belongs to the peptidase M14 family. The cofactor is Zn(2+).

It carries out the reaction Releases a C-terminal residue, which may be hydrophobic or positively charged.. Functionally, carboxypeptidase that possesses the specificities of both mammalian Cpase A and B. Thus shows broad substrate specificity, being able to cleave Cbz-Gly-Leu, Cbz-Gly-Val, Cbz-Gly-Phe, Cbz-Gly-Lys and Bz-Gly-Arg in vitro. This is Zinc carboxypeptidase from Saccharothrix mutabilis subsp. capreolus (Streptomyces capreolus).